A 362-amino-acid chain; its full sequence is 3-dehydroquinate synthase (362 aa).

NAD(+)-binding positions include 72–77 (DGEAHK), 106–110 (GVIGD), 130–131 (TT), lysine 143, and lysine 152. Glutamate 185, histidine 248, and histidine 265 together coordinate Zn(2+).

The protein belongs to the sugar phosphate cyclases superfamily. Dehydroquinate synthase family. It depends on Co(2+) as a cofactor. The cofactor is Zn(2+). NAD(+) is required as a cofactor.

It localises to the cytoplasm. The enzyme catalyses 7-phospho-2-dehydro-3-deoxy-D-arabino-heptonate = 3-dehydroquinate + phosphate. Its pathway is metabolic intermediate biosynthesis; chorismate biosynthesis; chorismate from D-erythrose 4-phosphate and phosphoenolpyruvate: step 2/7. Catalyzes the conversion of 3-deoxy-D-arabino-heptulosonate 7-phosphate (DAHP) to dehydroquinate (DHQ). This is 3-dehydroquinate synthase from Laribacter hongkongensis (strain HLHK9).